The sequence spans 482 residues: 23S rRNA (uracil(1939)-C(5))-methyltransferase RlmD (482 aa).

Residues 1–33 (MANLFKQSRAKQKNKTTPSQTQTSTKGSARANA) are disordered. The segment covering 15–28 (KTTPSQTQTSTKGS) has biased composition (low complexity). The 58-residue stretch at 51 to 108 (TAQDANNNAITIQELDWMGQGVARGATMYFVEGALPGETCDIEVVSSKKKVVSAKTIS) folds into the TRAM domain. Residues C121, C127, C130, and C208 each coordinate [4Fe-4S] cluster. S-adenosyl-L-methionine is bound by residues Q313, F342, N347, E363, D390, and D411. The Nucleophile role is filled by C437.

It belongs to the class I-like SAM-binding methyltransferase superfamily. RNA M5U methyltransferase family. RlmD subfamily.

The enzyme catalyses uridine(1939) in 23S rRNA + S-adenosyl-L-methionine = 5-methyluridine(1939) in 23S rRNA + S-adenosyl-L-homocysteine + H(+). In terms of biological role, catalyzes the formation of 5-methyl-uridine at position 1939 (m5U1939) in 23S rRNA. This Alteromonas mediterranea (strain DSM 17117 / CIP 110805 / LMG 28347 / Deep ecotype) protein is 23S rRNA (uracil(1939)-C(5))-methyltransferase RlmD.